The primary structure comprises 122 residues: MIQMQTNLDVADNSGARRVMCIKVLGGSKRRYATVGDIIVVSIKEAIPRGKVKKGDVMKAVVVRVSKDIRRADGSVIRFDRNAAVLINNQSEPVGTRIFGPVPRELRAKNHMKIISLAPEVL.

This sequence belongs to the universal ribosomal protein uL14 family. In terms of assembly, part of the 50S ribosomal subunit. Forms a cluster with proteins L3 and L19. In the 70S ribosome, L14 and L19 interact and together make contacts with the 16S rRNA in bridges B5 and B8.

Its function is as follows. Binds to 23S rRNA. Forms part of two intersubunit bridges in the 70S ribosome. This chain is Large ribosomal subunit protein uL14, found in Nitrobacter winogradskyi (strain ATCC 25391 / DSM 10237 / CIP 104748 / NCIMB 11846 / Nb-255).